A 59-amino-acid chain; its full sequence is Small ribosomal subunit protein bS21 (59 aa).

This sequence belongs to the bacterial ribosomal protein bS21 family.

This is Small ribosomal subunit protein bS21 from Acholeplasma laidlawii (strain PG-8A).